A 639-amino-acid chain; its full sequence is Chaperone protein DnaK (639 aa).

The residue at position 199 (Thr-199) is a Phosphothreonine; by autocatalysis. Low complexity predominate over residues 602-613 (AQAQQAAAGAEG). The segment at 602-639 (AQAQQAAAGAEGQPEDASAKQDDDVVDAEFEEVKDDKK) is disordered. The span at 625-639 (DVVDAEFEEVKDDKK) shows a compositional bias: acidic residues.

It belongs to the heat shock protein 70 family.

In terms of biological role, acts as a chaperone. The sequence is that of Chaperone protein DnaK from Pseudoalteromonas atlantica (strain T6c / ATCC BAA-1087).